Consider the following 1373-residue polypeptide: DNA-directed RNA polymerase subunit beta (1373 aa).

Belongs to the RNA polymerase beta chain family. The RNAP catalytic core consists of 2 alpha, 1 beta, 1 beta' and 1 omega subunit. When a sigma factor is associated with the core the holoenzyme is formed, which can initiate transcription.

The enzyme catalyses RNA(n) + a ribonucleoside 5'-triphosphate = RNA(n+1) + diphosphate. In terms of biological role, DNA-dependent RNA polymerase catalyzes the transcription of DNA into RNA using the four ribonucleoside triphosphates as substrates. The chain is DNA-directed RNA polymerase subunit beta from Rickettsia akari (strain Hartford).